Consider the following 583-residue polypeptide: Phosphoglucomutase, cytoplasmic 2 (583 aa).

2 residues coordinate alpha-D-glucose 1,6-bisphosphate: arginine 25 and serine 124. Residue serine 124 is the Phosphoserine intermediate of the active site. The Mg(2+) site is built by serine 124, aspartate 300, aspartate 302, and aspartate 304. Serine 124 bears the Phosphoserine mark. Alpha-D-glucose 1,6-bisphosphate-binding residues include aspartate 304, arginine 305, threonine 368, glutamate 387, serine 389, and lysine 400.

It belongs to the phosphohexose mutase family. Monomer. Mg(2+) is required as a cofactor.

The protein localises to the cytoplasm. The catalysed reaction is alpha-D-glucose 1-phosphate = alpha-D-glucose 6-phosphate. The enzyme catalyses O-phospho-L-seryl-[protein] + alpha-D-glucose 1-phosphate = alpha-D-glucose 1,6-bisphosphate + L-seryl-[protein]. It carries out the reaction alpha-D-glucose 1,6-bisphosphate + L-seryl-[protein] = O-phospho-L-seryl-[protein] + alpha-D-glucose 6-phosphate. Its function is as follows. Catalyzes the reversible isomerization of alpha-D-glucose 1-phosphate to alpha-D-glucose 6-phosphate. The mechanism proceeds via the intermediate compound alpha-D-glucose 1,6-bisphosphate. This enzyme participates in both the breakdown and synthesis of glucose. This chain is Phosphoglucomutase, cytoplasmic 2, found in Zea mays (Maize).